The following is a 932-amino-acid chain: Protein translocase subunit SecA (932 aa).

ATP is bound by residues glutamine 86, 104 to 108 (GEGKT), and aspartate 494. The segment at 857–932 (EDAGAEAHAS…KPAPKRKKRR (76 aa)) is disordered. The segment covering 905 to 915 (TAGSAGDSNLP) has biased composition (polar residues). Residues 920–932 (KTNKPAPKRKKRR) show a composition bias toward basic residues.

It belongs to the SecA family. Monomer and homodimer. Part of the essential Sec protein translocation apparatus which comprises SecA, SecYEG and auxiliary proteins SecDF. Other proteins may also be involved.

The protein localises to the cell membrane. It localises to the cytoplasm. The enzyme catalyses ATP + H2O + cellular proteinSide 1 = ADP + phosphate + cellular proteinSide 2.. Its function is as follows. Part of the Sec protein translocase complex. Interacts with the SecYEG preprotein conducting channel. Has a central role in coupling the hydrolysis of ATP to the transfer of proteins into and across the cell membrane, serving as an ATP-driven molecular motor driving the stepwise translocation of polypeptide chains across the membrane. The sequence is that of Protein translocase subunit SecA from Renibacterium salmoninarum (strain ATCC 33209 / DSM 20767 / JCM 11484 / NBRC 15589 / NCIMB 2235).